The chain runs to 292 residues: Mycothiol acetyltransferase (292 aa).

N-acetyltransferase domains follow at residues 13 to 168 (ALDR…KWLQ) and 159 to 292 (KSVA…VYEK). Glutamate 40 provides a ligand contact to 1D-myo-inositol 2-(L-cysteinylamino)-2-deoxy-alpha-D-glucopyranoside. An acetyl-CoA-binding site is contributed by 77-79 (LAV). Residues glutamate 179, lysine 218, and glutamate 226 each contribute to the 1D-myo-inositol 2-(L-cysteinylamino)-2-deoxy-alpha-D-glucopyranoside site. Acetyl-CoA is bound by residues 230-232 (VGL) and 237-243 (RGRGLGD). Tyrosine 264 is a 1D-myo-inositol 2-(L-cysteinylamino)-2-deoxy-alpha-D-glucopyranoside binding site.

It belongs to the acetyltransferase family. MshD subfamily. As to quaternary structure, monomer.

The enzyme catalyses 1D-myo-inositol 2-(L-cysteinylamino)-2-deoxy-alpha-D-glucopyranoside + acetyl-CoA = mycothiol + CoA + H(+). Catalyzes the transfer of acetyl from acetyl-CoA to desacetylmycothiol (Cys-GlcN-Ins) to form mycothiol. This is Mycothiol acetyltransferase from Corynebacterium glutamicum (strain R).